The chain runs to 488 residues: Sucrose 6(F)-phosphate phosphorylase (488 aa).

Sucrose 6(F)-phosphate is bound by residues D49, H87, R195–D197, E238, H295–D296, D342–Q345, and R399. The active-site Nucleophile is D197. Residue E238 is the Proton donor/acceptor of the active site.

The protein belongs to the glycosyl hydrolase 13 family. Sucrose phosphorylase subfamily. As to quaternary structure, monomer.

The enzyme catalyses sucrose 6(F)-phosphate + phosphate = beta-D-fructose 6-phosphate + alpha-D-glucose 1-phosphate. Catalyzes the reversible phosphorolysis of sucrose 6(F)-phosphate into alpha-D-glucose 1-phosphate (Glc1P) and D-fructose 6-phosphate. May be involved in a new pathway for the degradation of sucrose, which could become phosphorylated on its fructose moiety during uptake via a PTS system. To a lesser extent, can also reversibly act on sucrose in vitro. Is also able to catalyze transglycosylation reactions in vitro. This Thermoanaerobacterium thermosaccharolyticum (strain ATCC 7956 / DSM 571 / NCIMB 9385 / NCA 3814 / NCTC 13789 / WDCM 00135 / 2032) (Clostridium thermosaccharolyticum) protein is Sucrose 6(F)-phosphate phosphorylase.